We begin with the raw amino-acid sequence, 445 residues long: tRNA modification GTPase MnmE (445 aa).

Positions 20, 79, and 119 each coordinate (6S)-5-formyl-5,6,7,8-tetrahydrofolate. Residues 215 to 371 form the TrmE-type G domain; the sequence is GLKLAIIGPP…ILKNIENIAE (157 aa). Residue Asn-225 coordinates K(+). GTP contacts are provided by residues 225-230, 244-250, and 269-272; these read NTGKSS, SNIAGTT, and DTAG. Residue Ser-229 coordinates Mg(2+). K(+) contacts are provided by Ser-244, Ile-246, and Thr-249. Thr-250 is a binding site for Mg(2+). (6S)-5-formyl-5,6,7,8-tetrahydrofolate is bound at residue Lys-445.

The protein belongs to the TRAFAC class TrmE-Era-EngA-EngB-Septin-like GTPase superfamily. TrmE GTPase family. Homodimer. Heterotetramer of two MnmE and two MnmG subunits. The cofactor is K(+).

Its subcellular location is the cytoplasm. Functionally, exhibits a very high intrinsic GTPase hydrolysis rate. Involved in the addition of a carboxymethylaminomethyl (cmnm) group at the wobble position (U34) of certain tRNAs, forming tRNA-cmnm(5)s(2)U34. The polypeptide is tRNA modification GTPase MnmE (Rickettsia prowazekii (strain Madrid E)).